The primary structure comprises 232 residues: 7-cyano-7-deazaguanine synthase (232 aa).

8–18 (FSGGQDSTTCL) provides a ligand contact to ATP. Zn(2+)-binding residues include Cys187, Cys196, Cys199, and Cys202.

Belongs to the QueC family. Zn(2+) serves as cofactor.

The enzyme catalyses 7-carboxy-7-deazaguanine + NH4(+) + ATP = 7-cyano-7-deazaguanine + ADP + phosphate + H2O + H(+). It functions in the pathway purine metabolism; 7-cyano-7-deazaguanine biosynthesis. In terms of biological role, catalyzes the ATP-dependent conversion of 7-carboxy-7-deazaguanine (CDG) to 7-cyano-7-deazaguanine (preQ(0)). The sequence is that of 7-cyano-7-deazaguanine synthase from Vibrio parahaemolyticus serotype O3:K6 (strain RIMD 2210633).